We begin with the raw amino-acid sequence, 536 residues long: Lysosomal acid glucosylceramidase (536 aa).

Residues 1 to 39 (MELSSPSREECPRPQGRVGIMAASLMGLLLLQAASWASG) form the signal peptide. Intrachain disulfides connect C43/C55 and C57/C62. Residues N58, N98, and N185 are each glycosylated (N-linked (GlcNAc...) asparagine). E274 (proton donor) is an active-site residue. N309 carries N-linked (GlcNAc...) asparagine glycosylation. E379 serves as the catalytic Nucleophile. An N-linked (GlcNAc...) asparagine glycan is attached at N501.

This sequence belongs to the glycosyl hydrolase 30 family. Interacts with saposin-C. Interacts with SCARB2. Interacts with TCP1. Interacts with GRN; this interaction prevents aggregation of GBA1-SCARB2 complex via interaction with HSPA1A upon stress.

The protein localises to the lysosome membrane. It carries out the reaction a beta-D-glucosyl-(1&lt;-&gt;1')-N-acylsphing-4-enine + H2O = an N-acylsphing-4-enine + D-glucose. It catalyses the reaction a beta-D-galactosyl-(1&lt;-&gt;1')-N-acylsphing-4-enine + H2O = an N-acylsphing-4-enine + D-galactose. The enzyme catalyses cholesteryl 3-beta-D-glucoside + H2O = cholesterol + D-glucose. The catalysed reaction is a beta-D-glucosyl-(1&lt;-&gt;1')-N-acylsphing-4-enine + cholesterol = cholesteryl 3-beta-D-glucoside + an N-acylsphing-4-enine. It carries out the reaction beta-D-glucosyl-N-(9Z-octadecenoyl)-sphing-4E-enine + cholesterol = N-(9Z-octadecenoyl)-sphing-4-enine + cholesteryl 3-beta-D-glucoside. It catalyses the reaction beta-D-glucosyl-N-octanoylsphing-4E-enine + cholesterol = N-octanoylsphing-4-enine + cholesteryl 3-beta-D-glucoside. The enzyme catalyses beta-D-glucosyl-N-dodecanoylsphing-4-enine + cholesterol = N-dodecanoylsphing-4-enine + cholesteryl 3-beta-D-glucoside. The catalysed reaction is beta-D-glucosyl-(1&lt;-&gt;1)-N-octadecanoylsphing-4-enine + cholesterol = N-octadecanoylsphing-4-enine + cholesteryl 3-beta-D-glucoside. It carries out the reaction beta-D-glucosyl-(1&lt;-&gt;1')-N-(15Z-tetracosenoyl)-sphing-4-enine + cholesterol = N-(15Z-tetracosenoyl)-sphing-4-enine + cholesteryl 3-beta-D-glucoside. It catalyses the reaction a beta-D-galactosyl-(1&lt;-&gt;1')-N-acylsphing-4-enine + cholesterol = cholesteryl 3-beta-D-galactoside + an N-acylsphing-4-enine. The enzyme catalyses 1-(beta-D-galactosyl)-N-dodecanoylsphing-4-enine + cholesterol = cholesteryl 3-beta-D-galactoside + N-dodecanoylsphing-4-enine. The catalysed reaction is a beta-D-xylosyl-(1&lt;-&gt;1')-N-acylsphing-4-enine + cholesterol = cholesteryl 3-beta-D-xyloside + an N-acylsphing-4-enine. It carries out the reaction beta-D-xylosyl-(1&lt;-&gt;1')-N-(9Z-octadecenoyl)-sphing-4-enine + cholesterol = cholesteryl 3-beta-D-xyloside + N-(9Z-octadecenoyl)-sphing-4-enine. The protein operates within steroid metabolism; cholesterol metabolism. It participates in sphingolipid metabolism. Functionally, glucosylceramidase that catalyzes, within the lysosomal compartment, the hydrolysis of glucosylceramides/GlcCers (such as beta-D-glucosyl-(1&lt;-&gt;1')-N-acylsphing-4-enine) into free ceramides (such as N-acylsphing-4-enine) and glucose. Plays a central role in the degradation of complex lipids and the turnover of cellular membranes. Through the production of ceramides, participates in the PKC-activated salvage pathway of ceramide formation. Catalyzes the glucosylation of cholesterol, through a transglucosylation reaction where glucose is transferred from GlcCer to cholesterol. GlcCer containing mono-unsaturated fatty acids (such as beta-D-glucosyl-N-(9Z-octadecenoyl)-sphing-4-enine) are preferred as glucose donors for cholesterol glucosylation when compared with GlcCer containing same chain length of saturated fatty acids (such as beta-D-glucosyl-N-octadecanoyl-sphing-4-enine). Under specific conditions, may alternatively catalyze the reverse reaction, transferring glucose from cholesteryl 3-beta-D-glucoside to ceramide. Can also hydrolyze cholesteryl 3-beta-D-glucoside producing glucose and cholesterol. Catalyzes the hydrolysis of galactosylceramides/GalCers (such as beta-D-galactosyl-(1&lt;-&gt;1')-N-acylsphing-4-enine), as well as the transfer of galactose between GalCers and cholesterol in vitro, but with lower activity than with GlcCers. Contrary to GlcCer and GalCer, xylosylceramide/XylCer (such as beta-D-xyosyl-(1&lt;-&gt;1')-N-acylsphing-4-enine) is not a good substrate for hydrolysis, however it is a good xylose donor for transxylosylation activity to form cholesteryl 3-beta-D-xyloside. The protein is Lysosomal acid glucosylceramidase (GBA1) of Sus scrofa (Pig).